A 550-amino-acid chain; its full sequence is Arginine--tRNA ligase (550 aa).

The 'HIGH' region motif lies at 130-140 (ANPTGPIHIGG).

It belongs to the class-I aminoacyl-tRNA synthetase family. In terms of assembly, monomer.

It localises to the cytoplasm. It catalyses the reaction tRNA(Arg) + L-arginine + ATP = L-arginyl-tRNA(Arg) + AMP + diphosphate. This is Arginine--tRNA ligase from Mycobacterium marinum (strain ATCC BAA-535 / M).